A 162-amino-acid chain; its full sequence is NADH-ubiquinone oxidoreductase subunit 8 (162 aa).

4Fe-4S ferredoxin-type domains are found at residues 54 to 83 (RRYQ…IESE) and 93 to 122 (TRYD…EGPN). Residues cysteine 63, cysteine 66, cysteine 69, cysteine 73, cysteine 102, cysteine 105, cysteine 108, and cysteine 112 each contribute to the [4Fe-4S] cluster site.

Belongs to the complex I 23 kDa subunit family. [4Fe-4S] cluster serves as cofactor.

It localises to the mitochondrion. It catalyses the reaction a ubiquinone + NADH + 5 H(+)(in) = a ubiquinol + NAD(+) + 4 H(+)(out). Its function is as follows. Core subunit of the mitochondrial membrane respiratory chain NADH dehydrogenase (Complex I) that is believed to belong to the minimal assembly required for catalysis. Complex I functions in the transfer of electrons from NADH to the respiratory chain. The immediate electron acceptor for the enzyme is believed to be ubiquinone. May donate electrons to ubiquinone. This chain is NADH-ubiquinone oxidoreductase subunit 8 (NAD8), found in Reclinomonas americana.